Here is a 417-residue protein sequence, read N- to C-terminus: S-adenosylmethionine synthase (417 aa).

Residue His-16 coordinates ATP. Mg(2+) is bound at residue Asp-18. Glu-44 provides a ligand contact to K(+). Residues Glu-57 and Gln-100 each contribute to the L-methionine site. A flexible loop region spans residues 100 to 110 (QSPDIAQGVTS). Residues 175 to 177 (DGK), 251 to 252 (KF), Asp-260, 266 to 267 (RK), Ala-283, and Lys-287 each bind ATP. Residue Asp-260 coordinates L-methionine. Lys-291 contributes to the L-methionine binding site.

The protein belongs to the AdoMet synthase family. As to quaternary structure, homotetramer; dimer of dimers. The cofactor is Mg(2+). It depends on K(+) as a cofactor.

It is found in the cytoplasm. The enzyme catalyses L-methionine + ATP + H2O = S-adenosyl-L-methionine + phosphate + diphosphate. Its pathway is amino-acid biosynthesis; S-adenosyl-L-methionine biosynthesis; S-adenosyl-L-methionine from L-methionine: step 1/1. Catalyzes the formation of S-adenosylmethionine (AdoMet) from methionine and ATP. The overall synthetic reaction is composed of two sequential steps, AdoMet formation and the subsequent tripolyphosphate hydrolysis which occurs prior to release of AdoMet from the enzyme. The chain is S-adenosylmethionine synthase from Picosynechococcus sp. (strain ATCC 27264 / PCC 7002 / PR-6) (Agmenellum quadruplicatum).